Here is a 320-residue protein sequence, read N- to C-terminus: Meso-diaminopimelate D-dehydrogenase (320 aa).

Residues 11–14 (YGNL), 35–37 (SRR), 65–68 (CMGS), 88–90 (TYD), and 117–121 (TGWDP) contribute to the NADP(+) site. Substrate-binding positions include aspartate 90, aspartate 120, tryptophan 144, 150 to 151 (QG), threonine 169, arginine 195, histidine 244, and asparagine 270.

As to quaternary structure, homodimer.

The catalysed reaction is meso-2,6-diaminopimelate + NADP(+) + H2O = (S)-2-amino-6-oxoheptanedioate + NH4(+) + NADPH + H(+). Its pathway is amino-acid biosynthesis; L-lysine biosynthesis via DAP pathway; DL-2,6-diaminopimelate from (S)-tetrahydrodipicolinate: step 1/1. Its activity is regulated as follows. L,L-2,6-diaminopimelate and D,D-2,6-diaminopimelate competitively inhibit the oxidative deamination of meso-2,6-diaminopimelate. The enzyme is also inhibited by L-cysteine, and by p-chloromercuribenzoate, iodoacetic acid and HgCl(2) in vitro. Its function is as follows. Catalyzes the reversible NADPH-dependent reductive amination of L-2-amino-6-oxopimelate, the acyclic form of L-tetrahydrodipicolinate, to generate the meso compound, D,L-2,6-diaminopimelate. Probably plays a role in lysine biosynthesis. Exhibits a high substrate specificity for meso-2,6-diaminopimelate, since L,L-2,6-diaminopimelate, D,D-2,6-diaminopimelate, L-glutamate, L-alanine, L-leucine, L-valine, L-aspartate, L-threonine, L-homoserine, L-methionine, L-lysine, L-serine, L-phenylalanine, L-tyrosine, L-tryptophan, L-ornithine, L-histidine, L-arginine, D-glutamate, and D-alanine are not substrates for the oxidative deamination reaction. Can use NAD(+) only poorly since the activity observed in the presence of NAD(+) is about 3% of that with NADP(+). This Corynebacterium glutamicum (strain ATCC 13032 / DSM 20300 / JCM 1318 / BCRC 11384 / CCUG 27702 / LMG 3730 / NBRC 12168 / NCIMB 10025 / NRRL B-2784 / 534) protein is Meso-diaminopimelate D-dehydrogenase (ddh).